Here is a 104-residue protein sequence, read N- to C-terminus: Small ribosomal subunit protein uS10 (104 aa).

This sequence belongs to the universal ribosomal protein uS10 family. As to quaternary structure, part of the 30S ribosomal subunit.

Functionally, involved in the binding of tRNA to the ribosomes. In Ralstonia nicotianae (strain ATCC BAA-1114 / GMI1000) (Ralstonia solanacearum), this protein is Small ribosomal subunit protein uS10.